Consider the following 144-residue polypeptide: Large ribosomal subunit protein uL16 (144 aa).

The protein belongs to the universal ribosomal protein uL16 family. As to quaternary structure, part of the 50S ribosomal subunit.

Its function is as follows. Binds 23S rRNA and is also seen to make contacts with the A and possibly P site tRNAs. The chain is Large ribosomal subunit protein uL16 from Thermoanaerobacter sp. (strain X514).